The sequence spans 284 residues: Nucleotide-binding protein Sbal_3671 (284 aa).

8–15 (GRSGSGKS) serves as a coordination point for ATP. 56–59 (DVRN) is a GTP binding site.

It belongs to the RapZ-like family.

Displays ATPase and GTPase activities. The chain is Nucleotide-binding protein Sbal_3671 from Shewanella baltica (strain OS155 / ATCC BAA-1091).